A 391-amino-acid chain; its full sequence is MNAGALSRMLSEGLAARRAEGLYRSPRVLKSVDGACGLTADGRTVVVFCANDYLGLASDPRPGRVMARVAEEQGAGSGAAHLVSGHRPEHEALERALADWTGREAALLFSTGYMANLGVIDALVGRGDTVFEDRLNHASLLDGARLSGARLRRYRHGDVDHLARRLAEDGGRHRLIVTDGVFSMDGDRAPVAELARLARDHGAWLMVDDAHGLGVLGEKGGGLLEQSGLDQDDVPVLVGTLGKAVGSFGAFVAGRRLLIDHLVQSARTWIYTTAPSPAQTAATVEAVRLARHETWRREHLRALVRRFRAGIADLGLDLMPSETPIQPIVVGEADQALQASRALEERGYLVTAIRPPTVPKGTARLRVTLSAAHTPQQVDGLVAALGQVLGQ.

A substrate-binding site is contributed by Arg24. Pyridoxal 5'-phosphate is bound at residue 112–113 (GY). Residue His137 participates in substrate binding. Positions 183, 211, and 240 each coordinate pyridoxal 5'-phosphate. Residue Lys243 is modified to N6-(pyridoxal phosphate)lysine. Thr357 provides a ligand contact to substrate.

Belongs to the class-II pyridoxal-phosphate-dependent aminotransferase family. BioF subfamily. As to quaternary structure, homodimer. It depends on pyridoxal 5'-phosphate as a cofactor.

It catalyses the reaction 6-carboxyhexanoyl-[ACP] + L-alanine + H(+) = (8S)-8-amino-7-oxononanoate + holo-[ACP] + CO2. It functions in the pathway cofactor biosynthesis; biotin biosynthesis. Its function is as follows. Catalyzes the decarboxylative condensation of pimeloyl-[acyl-carrier protein] and L-alanine to produce 8-amino-7-oxononanoate (AON), [acyl-carrier protein], and carbon dioxide. The polypeptide is 8-amino-7-oxononanoate synthase (Alkalilimnicola ehrlichii (strain ATCC BAA-1101 / DSM 17681 / MLHE-1)).